We begin with the raw amino-acid sequence, 628 residues long: Cytoplasmic dynein 1 intermediate chain 1 (628 aa).

Basic and acidic residues-rich tracts occupy residues 1 to 13 (MSDK…ELER) and 20 to 60 (QIRE…RETE). Positions 1-114 (MSDKSDLKAE…RTLQWDTDPS (114 aa)) are disordered. S2 carries the N-acetylserine modification. S50 carries the phosphoserine modification. Pro residues predominate over residues 70-79 (PEPPLVPTPM). Residues 80–90 (SPSSKSVSTPS) show a composition bias toward low complexity. At S83 the chain carries Phosphoserine. T88 is modified (phosphothreonine). 3 positions are modified to phosphoserine: S90, S94, and S97. Polar residues predominate over residues 105–114 (RTLQWDTDPS). Residues 130–146 (KLGVSKVTQVDFLPREV) form an interaction with DYNLT1 region. A disordered region spans residues 152-204 (ETQTPLATHQSEEDEEDEEMVEPKIGHDSELENQEKKQETKEAPPRELTEEEK). T159 is modified (phosphothreonine). Phosphoserine occurs at positions 162 and 180. Basic and acidic residues predominate over residues 172-204 (VEPKIGHDSELENQEKKQETKEAPPRELTEEEK). 7 WD repeats span residues 268–317 (SKHR…TTPE), 321–361 (HCQS…RTPV), 370–411 (AHTH…TPQE), 420–460 (SKPV…AGIG), 465–510 (GHQG…PLYS), 513–553 (DNAD…EVPT), and 559–598 (EGAS…VPHN). Phosphoserine is present on S618.

It belongs to the dynein intermediate chain family. As to quaternary structure, homodimer. The cytoplasmic dynein 1 complex consists of two catalytic heavy chains (HCs) and a number of non-catalytic subunits presented by intermediate chains (ICs), light intermediate chains (LICs) and light chains (LCs); the composition seems to vary in respect to the IC, LIC and LC composition. The heavy chain homodimer serves as a scaffold for the probable homodimeric assembly of the respective non-catalytic subunits. The ICs and LICs bind directly to the HC dimer and the LCs assemble on the IC dimer. Interacts with DYNC1H1. Interacts with DYNLT1 and DYNLT3. Interacts with DCTN1. Interacts with DYNLL2. Interacts with MCRS1; the interaction is required for the proper distribution of centriolar satellites.

The protein resides in the cytoplasm. It localises to the chromosome. Its subcellular location is the centromere. It is found in the kinetochore. The protein localises to the cytoskeleton. The protein resides in the spindle pole. Functionally, acts as one of several non-catalytic accessory components of the cytoplasmic dynein 1 complex that are thought to be involved in linking dynein to cargos and to adapter proteins that regulate dynein function. Cytoplasmic dynein 1 acts as a motor for the intracellular retrograde motility of vesicles and organelles along microtubules. The intermediate chains mediate the binding of dynein to dynactin via its 150 kDa component (p150-glued) DCTN1. May play a role in mediating the interaction of cytoplasmic dynein with membranous organelles and kinetochores. The chain is Cytoplasmic dynein 1 intermediate chain 1 (Dync1i1) from Mus musculus (Mouse).